Consider the following 126-residue polypeptide: Profilin-1 (126 aa).

Belongs to the profilin family. In terms of assembly, occurs in many kinds of cells as a complex with monomeric actin in a 1:1 ratio.

Its subcellular location is the cytoplasm. The protein resides in the cytoskeleton. Functionally, binds to actin and affects the structure of the cytoskeleton. At high concentrations, profilin prevents the polymerization of actin, whereas it enhances it at low concentrations. By binding to PIP2, it inhibits the formation of IP3 and DG. This is Profilin-1 (proA) from Dictyostelium discoideum (Social amoeba).